The sequence spans 276 residues: Diaminopimelate epimerase (276 aa).

3 residues coordinate substrate: asparagine 13, glutamine 46, and asparagine 66. The active-site Proton donor is cysteine 75. Substrate is bound by residues 76-77 (GN), asparagine 159, asparagine 192, and 210-211 (ER). Cysteine 219 acts as the Proton acceptor in catalysis. Substrate is bound at residue 220–221 (GS).

This sequence belongs to the diaminopimelate epimerase family. As to quaternary structure, homodimer.

It localises to the cytoplasm. It carries out the reaction (2S,6S)-2,6-diaminopimelate = meso-2,6-diaminopimelate. Its pathway is amino-acid biosynthesis; L-lysine biosynthesis via DAP pathway; DL-2,6-diaminopimelate from LL-2,6-diaminopimelate: step 1/1. Functionally, catalyzes the stereoinversion of LL-2,6-diaminopimelate (L,L-DAP) to meso-diaminopimelate (meso-DAP), a precursor of L-lysine and an essential component of the bacterial peptidoglycan. The polypeptide is Diaminopimelate epimerase (Pseudoalteromonas atlantica (strain T6c / ATCC BAA-1087)).